The following is a 302-amino-acid chain: 4-hydroxy-tetrahydrodipicolinate synthase (302 aa).

Residue T56 coordinates pyruvate. Y145 acts as the Proton donor/acceptor in catalysis. K173 serves as the catalytic Schiff-base intermediate with substrate. V215 lines the pyruvate pocket.

It belongs to the DapA family. As to quaternary structure, homotetramer; dimer of dimers.

Its subcellular location is the cytoplasm. It catalyses the reaction L-aspartate 4-semialdehyde + pyruvate = (2S,4S)-4-hydroxy-2,3,4,5-tetrahydrodipicolinate + H2O + H(+). It participates in amino-acid biosynthesis; L-lysine biosynthesis via DAP pathway; (S)-tetrahydrodipicolinate from L-aspartate: step 3/4. Catalyzes the condensation of (S)-aspartate-beta-semialdehyde [(S)-ASA] and pyruvate to 4-hydroxy-tetrahydrodipicolinate (HTPA). The sequence is that of 4-hydroxy-tetrahydrodipicolinate synthase from Prochlorococcus marinus (strain MIT 9515).